Reading from the N-terminus, the 208-residue chain is Large ribosomal subunit protein bL25 (208 aa).

This sequence belongs to the bacterial ribosomal protein bL25 family. CTC subfamily. As to quaternary structure, part of the 50S ribosomal subunit; part of the 5S rRNA/L5/L18/L25 subcomplex. Contacts the 5S rRNA. Binds to the 5S rRNA independently of L5 and L18.

Its function is as follows. This is one of the proteins that binds to the 5S RNA in the ribosome where it forms part of the central protuberance. The protein is Large ribosomal subunit protein bL25 of Bordetella pertussis (strain Tohama I / ATCC BAA-589 / NCTC 13251).